The chain runs to 306 residues: Agmatinase (306 aa).

Mn(2+)-binding residues include His126, Asp149, His151, Asp153, Asp230, and Asp232.

The protein belongs to the arginase family. Agmatinase subfamily. Requires Mn(2+) as cofactor.

It carries out the reaction agmatine + H2O = urea + putrescine. It participates in amine and polyamine biosynthesis; putrescine biosynthesis via agmatine pathway; putrescine from agmatine: step 1/1. Its function is as follows. Catalyzes the formation of putrescine from agmatine. This Escherichia coli (strain K12 / DH10B) protein is Agmatinase.